Reading from the N-terminus, the 259-residue chain is Ribosomal RNA small subunit methyltransferase J (259 aa).

Residues 101 to 102 (RD), 117 to 118 (ER), 153 to 154 (SS), and D176 contribute to the S-adenosyl-L-methionine site.

The protein belongs to the methyltransferase superfamily. RsmJ family.

The protein resides in the cytoplasm. It catalyses the reaction guanosine(1516) in 16S rRNA + S-adenosyl-L-methionine = N(2)-methylguanosine(1516) in 16S rRNA + S-adenosyl-L-homocysteine + H(+). Its function is as follows. Specifically methylates the guanosine in position 1516 of 16S rRNA. The chain is Ribosomal RNA small subunit methyltransferase J from Aliivibrio fischeri (strain MJ11) (Vibrio fischeri).